We begin with the raw amino-acid sequence, 371 residues long: Maltose/maltodextrin import ATP-binding protein MalK (371 aa).

The ABC transporter domain occupies 4–234; it reads VQLQNVTKAW…PADRFVAGFI (231 aa). 36 to 43 contacts ATP; the sequence is GPSGCGKS.

This sequence belongs to the ABC transporter superfamily. Maltooligosaccharide importer (TC 3.A.1.1.1) family. In terms of assembly, the complex is composed of two ATP-binding proteins (MalK), two transmembrane proteins (MalG and MalK) and a solute-binding protein (MalE).

Its subcellular location is the cell inner membrane. The catalysed reaction is D-maltose(out) + ATP + H2O = D-maltose(in) + ADP + phosphate + H(+). In terms of biological role, part of the ABC transporter complex MalEFGK involved in maltose/maltodextrin import. Responsible for energy coupling to the transport system. The sequence is that of Maltose/maltodextrin import ATP-binding protein MalK from Escherichia coli O6:H1 (strain CFT073 / ATCC 700928 / UPEC).